Here is a 224-residue protein sequence, read N- to C-terminus: uncharacterized protein (224 aa).

This is an uncharacterized protein from Saccharomyces cerevisiae (strain ATCC 204508 / S288c) (Baker's yeast).